Consider the following 355-residue polypeptide: Undecaprenyl-phosphate alpha-N-acetylglucosaminyl 1-phosphate transferase (355 aa).

The next 8 membrane-spanning stretches (helical) occupy residues 1 to 21, 39 to 59, 63 to 83, 123 to 143, 182 to 202, 208 to 228, 237 to 257, and 315 to 335; these read MLSI…MRPL, GTIP…YYLM, QLRL…IGIL, FQLT…IAII, WSFA…GIPF, VFMG…ILLL, MNPV…VAII, and WAMF…ITHA.

It belongs to the glycosyltransferase 4 family. WecA subfamily. The cofactor is Mg(2+). Requires Mn(2+) as cofactor.

Its subcellular location is the cell inner membrane. The enzyme catalyses di-trans,octa-cis-undecaprenyl phosphate + UDP-N-acetyl-alpha-D-glucosamine = N-acetyl-alpha-D-glucosaminyl-di-trans,octa-cis-undecaprenyl diphosphate + UMP. It participates in bacterial outer membrane biogenesis; LPS O-antigen biosynthesis. Its function is as follows. Catalyzes the transfer of the GlcNAc-1-phosphate moiety from UDP-GlcNAc onto the carrier lipid undecaprenyl phosphate (C55-P), yielding GlcNAc-pyrophosphoryl-undecaprenyl (GlcNAc-PP-C55). The protein is Undecaprenyl-phosphate alpha-N-acetylglucosaminyl 1-phosphate transferase of Haemophilus influenzae (strain ATCC 51907 / DSM 11121 / KW20 / Rd).